The sequence spans 191 residues: Phosphopantetheine adenylyltransferase (191 aa).

Serine 8 serves as a coordination point for substrate. Residues 8–9 (SF) and histidine 16 each bind ATP. Residues lysine 40, threonine 72, and arginine 86 each contribute to the substrate site. ATP is bound by residues 87–89 (GLR), glutamate 97, and 122–128 (YSFLSSS).

Belongs to the bacterial CoaD family. As to quaternary structure, homohexamer. Mg(2+) is required as a cofactor.

The protein localises to the cytoplasm. It carries out the reaction (R)-4'-phosphopantetheine + ATP + H(+) = 3'-dephospho-CoA + diphosphate. The protein operates within cofactor biosynthesis; coenzyme A biosynthesis; CoA from (R)-pantothenate: step 4/5. Reversibly transfers an adenylyl group from ATP to 4'-phosphopantetheine, yielding dephospho-CoA (dPCoA) and pyrophosphate. The chain is Phosphopantetheine adenylyltransferase from Nostoc sp. (strain PCC 7120 / SAG 25.82 / UTEX 2576).